The sequence spans 279 residues: Fatty-acid-binding protein 1 (279 aa).

Residues arginine 103, tyrosine 116, and serine 183 each contribute to the dodecanoate site.

It belongs to the chalcone isomerase family. In terms of tissue distribution, expressed in developing cotyledons, young seedlings, roots, seeds, embryos, macrospores, preanthesis and tapetum. Restricted to developing and reproductive tissues.

Its subcellular location is the plastid. The protein resides in the chloroplast stroma. Functionally, fatty-acid-binding protein. Interacts preferentially with saturated fatty acid. May be involved in alpha-linolenic (C18:3) metabolism. The chain is Fatty-acid-binding protein 1 (FAP1) from Arabidopsis thaliana (Mouse-ear cress).